Here is a 75-residue protein sequence, read N- to C-terminus: Large ribosomal subunit protein eL14 (75 aa).

This sequence belongs to the eukaryotic ribosomal protein eL14 family.

In Methanothermobacter thermautotrophicus (strain ATCC 29096 / DSM 1053 / JCM 10044 / NBRC 100330 / Delta H) (Methanobacterium thermoautotrophicum), this protein is Large ribosomal subunit protein eL14.